The chain runs to 261 residues: Ribosomal RNA small subunit methyltransferase J (261 aa).

S-adenosyl-L-methionine-binding positions include 111–112 (RD), 127–128 (ER), 163–164 (SS), and Asp-181.

The protein belongs to the methyltransferase superfamily. RsmJ family.

It localises to the cytoplasm. The enzyme catalyses guanosine(1516) in 16S rRNA + S-adenosyl-L-methionine = N(2)-methylguanosine(1516) in 16S rRNA + S-adenosyl-L-homocysteine + H(+). Specifically methylates the guanosine in position 1516 of 16S rRNA. The sequence is that of Ribosomal RNA small subunit methyltransferase J from Shewanella sp. (strain ANA-3).